The chain runs to 118 residues: MCITSLKNQKEFELINKLGQKFYERYFILVIAKKLPKIFLESKYNTFLGIKVSRKLNKKAVVRNKIKRRIRHLMRIIVNDSSVKAIKFAIIIIPRKGFEEINFSHLNYELSKIILRNI.

Belongs to the RnpA family. In terms of assembly, consists of a catalytic RNA component (M1 or rnpB) and a protein subunit.

The enzyme catalyses Endonucleolytic cleavage of RNA, removing 5'-extranucleotides from tRNA precursor.. Functionally, RNaseP catalyzes the removal of the 5'-leader sequence from pre-tRNA to produce the mature 5'-terminus. It can also cleave other RNA substrates such as 4.5S RNA. The protein component plays an auxiliary but essential role in vivo by binding to the 5'-leader sequence and broadening the substrate specificity of the ribozyme. The chain is Ribonuclease P protein component from Rickettsia typhi (strain ATCC VR-144 / Wilmington).